A 337-amino-acid chain; its full sequence is uncharacterized protein (337 aa).

The span at 42–66 shows a compositional bias: low complexity; sequence SHSVSPSPSPSDFSSSSSSSSSSPS. The disordered stretch occupies residues 42-68; it reads SHSVSPSPSPSDFSSSSSSSSSSPSTF. Residues 129–304 form the Exonuclease domain; it reads FLVIDLEGKV…DDTKNITRVV (176 aa). The Mg(2+) site is built by Asp133, Glu135, and Asp234. The active-site Proton acceptor is the Glu135. Glu135 contacts AMP. His291 (proton acceptor) is an active-site residue. His291 is an AMP binding site. Asp296 provides a ligand contact to Mg(2+).

This is an uncharacterized protein from Arabidopsis thaliana (Mouse-ear cress).